The sequence spans 374 residues: F-box/LRR-repeat protein 8 (374 aa).

Positions 2-48 (GELVDNLPEEVLALIFRDLPLRDLAVATRVCRAWAAAAANSTVWSDK) constitute an F-box domain.

In terms of assembly, directly interacts with SKP1 and CUL1. Widely expressed during embryogenesis and in adult tissues.

Substrate-recognition component of the SCF (SKP1-CUL1-F-box protein)-type E3 ubiquitin ligase complex. The polypeptide is F-box/LRR-repeat protein 8 (Fbxl8) (Mus musculus (Mouse)).